We begin with the raw amino-acid sequence, 471 residues long: Citrate synthase, mitochondrial (471 aa).

Residues histidine 309, histidine 355, and aspartate 409 contribute to the active site.

This sequence belongs to the citrate synthase family. As to quaternary structure, homodimer. In terms of tissue distribution, ubiquitous.

The protein localises to the mitochondrion matrix. The catalysed reaction is oxaloacetate + acetyl-CoA + H2O = citrate + CoA + H(+). Its pathway is carbohydrate metabolism; tricarboxylic acid cycle; isocitrate from oxaloacetate: step 1/2. This Solanum tuberosum (Potato) protein is Citrate synthase, mitochondrial.